A 231-amino-acid polypeptide reads, in one-letter code: 7-cyano-7-deazaguanine synthase (231 aa).

ATP is bound at residue 8-18 (FSGGQDSTTCL). C188, C197, C200, and C203 together coordinate Zn(2+).

The protein belongs to the QueC family. Zn(2+) is required as a cofactor.

It carries out the reaction 7-carboxy-7-deazaguanine + NH4(+) + ATP = 7-cyano-7-deazaguanine + ADP + phosphate + H2O + H(+). The protein operates within purine metabolism; 7-cyano-7-deazaguanine biosynthesis. Its function is as follows. Catalyzes the ATP-dependent conversion of 7-carboxy-7-deazaguanine (CDG) to 7-cyano-7-deazaguanine (preQ(0)). The protein is 7-cyano-7-deazaguanine synthase of Salmonella arizonae (strain ATCC BAA-731 / CDC346-86 / RSK2980).